The chain runs to 28 residues: Ranatuerin-2AVa (28 aa).

Residues Cys23 and Cys28 are joined by a disulfide bond.

Expressed by the skin glands.

The protein localises to the secreted. Functionally, has antibacterial activity against the Gram positive bacterium L.lactis. The chain is Ranatuerin-2AVa from Rana arvalis (Moor frog).